The sequence spans 309 residues: Probable cell division protein WhiA (309 aa).

A DNA-binding region (H-T-H motif) is located at residues 275–309; sequence SLKELGELVPGGPISKSGINHRLRKINQYAEKLRA.

The protein belongs to the WhiA family.

Involved in cell division and chromosome segregation. This chain is Probable cell division protein WhiA, found in Pediococcus pentosaceus (strain ATCC 25745 / CCUG 21536 / LMG 10740 / 183-1w).